The chain runs to 98 residues: Cell division protein FtsB (98 aa).

The Cytoplasmic portion of the chain corresponds to 1–3 (MKR). Residues 4–21 (LLFVLIALLAMLQYRLWL) traverse the membrane as a helical segment. At 22 to 98 (GDKSLADSFH…GGERGGVPEN (77 aa)) the chain is on the periplasmic side. A coiled-coil region spans residues 31–74 (HLQEQIKLQQQSNAQLVARNQVLREEISDLRSGTEALEERARNE).

Belongs to the FtsB family. As to quaternary structure, part of a complex composed of FtsB, FtsL and FtsQ.

It localises to the cell inner membrane. Essential cell division protein. May link together the upstream cell division proteins, which are predominantly cytoplasmic, with the downstream cell division proteins, which are predominantly periplasmic. The chain is Cell division protein FtsB from Shewanella pealeana (strain ATCC 700345 / ANG-SQ1).